Reading from the N-terminus, the 117-residue chain is Large ribosomal subunit protein uL18 (117 aa).

It belongs to the universal ribosomal protein uL18 family. As to quaternary structure, part of the 50S ribosomal subunit; part of the 5S rRNA/L5/L18/L25 subcomplex. Contacts the 5S and 23S rRNAs.

In terms of biological role, this is one of the proteins that bind and probably mediate the attachment of the 5S RNA into the large ribosomal subunit, where it forms part of the central protuberance. This chain is Large ribosomal subunit protein uL18, found in Thiobacillus denitrificans (strain ATCC 25259 / T1).